A 164-amino-acid polypeptide reads, in one-letter code: UPF0304 protein YfbU (164 aa).

The protein belongs to the UPF0304 family.

The protein is UPF0304 protein YfbU of Shigella flexneri.